Here is an 813-residue protein sequence, read N- to C-terminus: Tax1-binding protein 1 homolog (813 aa).

A phosphoserine mark is found at Ser124, Ser138, and Ser225. Positions 144-596 (TTKAGLLELK…SYSLQLAEKD (453 aa)) form a coiled coil. Residues 320–420 (EEIGKLQSCL…ELQLHAVKTD (101 aa)) are oligomerization. The residue at position 618 (Ser618) is a Phosphoserine; by IKKA. Ser631 carries the phosphoserine modification. The segment at 667–732 (AHETRDGADG…NVPIPPDPAN (66 aa)) is disordered. Residue Ser692 is modified to Phosphoserine; by IKKA. 2 UBZ1-type zinc fingers span residues 751 to 777 (HKKC…VESH) and 778 to 804 (WKVC…VQTH). Positions 754, 757, 773, 777, 781, 784, 800, and 804 each coordinate Zn(2+).

In terms of assembly, homooligomer. Interacts with TNFAIP3. Interacts with STARD13. Interacts with MYO6. Interacts with TOM1; the interaction is indirect and is mediated by MYO6, which acts as a bridge between TOM1 and TAX1BP1. Interacts with MAVS; this interaction induces MAVS polyubiquitination. Interacts with TNIP1. Interacts with TRAF6; this interaction mediates deubiquitination of TRAF6 and inhibition of NF-kappa-B activation. Interacts with RIPK1; this interaction negatively regulates RIPK1 ubiquitination. Interacts with NBR1. Interacts with TBK1. Interacts with RB1CC1. Interacts with SQSTM1. Interacts with AZI2. Interacts with TICAM1 and TRIM32; these interactions target TICAM1 to TAX1BP1-mediated selective autophagic degradation. Phosphorylated in the C-terminal region by CHUK/IKKA leading to NF-kappa-B signaling down-regulation.

The protein localises to the cytoplasm. It localises to the mitochondrion. Its subcellular location is the preautophagosomal structure. It is found in the cytoplasmic vesicle. The protein resides in the autophagosome. Functionally, ubiquitin-binding adapter that participates in inflammatory, antiviral and innate immune processes as well as selective autophagy regulation. Plays a key role in the negative regulation of NF-kappa-B and IRF3 signalings by acting as an adapter for the ubiquitin-editing enzyme A20/TNFAIP3 to bind and inactivate its substrates. Disrupts the interactions between the E3 ubiquitin ligase TRAF3 and TBK1/IKBKE to attenuate 'Lys63'-linked polyubiquitination of TBK1 and thereby IFN-beta production. Also recruits A20/TNFAIP3 to ubiquitinated signaling proteins TRAF6 and RIPK1, leading to their deubiquitination and disruption of IL-1 and TNF-induced NF-kappa-B signaling pathways. Inhibits virus-induced apoptosis by inducing the 'Lys-48'-linked polyubiquitination and degradation of MAVS via recruitment of the E3 ligase ITCH, thereby attenuating MAVS-mediated apoptosis signaling. As a macroautophagy/autophagy receptor, facilitates the xenophagic clearance of pathogenic bacteria such as Salmonella typhimurium and Mycobacterium tuberculosis. Upon NBR1 recruitment to the SQSTM1-ubiquitin condensates, acts as the major recruiter of RB1CC1 to these ubiquitin condensates to promote their autophagic degradation. Mediates the autophagic degradation of other substrates including TICAM1. This chain is Tax1-binding protein 1 homolog (Tax1bp1), found in Rattus norvegicus (Rat).